A 154-amino-acid polypeptide reads, in one-letter code: Small ribosomal subunit protein uS15 (154 aa).

Over residues 1 to 11 (MSRLHAHKRYH) the composition is skewed to basic residues. The disordered stretch occupies residues 1–24 (MSRLHAHKRYHGQSGSKRPLRTTK).

It belongs to the universal ribosomal protein uS15 family. Part of the 30S ribosomal subunit.

This chain is Small ribosomal subunit protein uS15, found in Nanoarchaeum equitans (strain Kin4-M).